The primary structure comprises 150 residues: UPF0178 protein ECA0873 (150 aa).

The protein belongs to the UPF0178 family.

The polypeptide is UPF0178 protein ECA0873 (Pectobacterium atrosepticum (strain SCRI 1043 / ATCC BAA-672) (Erwinia carotovora subsp. atroseptica)).